Reading from the N-terminus, the 148-residue chain is Large ribosomal subunit protein cL37 (148 aa).

The N-terminal 65 residues, 1-65 (MALLCFNSLP…SSHGRIVVKA (65 aa)), are a transit peptide targeting the chloroplast. Residue Ala-66 is modified to N-acetylalanine. Residues 125 to 148 (LVRKRKMRKKGRWPPSKMKKNKNV) form a disordered region.

The protein belongs to the chloroplast-specific ribosomal protein cL37 family. Part of the 50S ribosomal subunit.

The protein resides in the plastid. It is found in the chloroplast. The polypeptide is Large ribosomal subunit protein cL37 (PSRP5) (Arabidopsis thaliana (Mouse-ear cress)).